The chain runs to 467 residues: Probable citrate synthase 2, mitochondrial (467 aa).

Residues His-303, His-349, and Asp-404 contribute to the active site.

Belongs to the citrate synthase family. As to quaternary structure, homodimer.

The protein localises to the mitochondrion matrix. The enzyme catalyses oxaloacetate + acetyl-CoA + H2O = citrate + CoA + H(+). It functions in the pathway carbohydrate metabolism; tricarboxylic acid cycle; isocitrate from oxaloacetate: step 1/2. This chain is Probable citrate synthase 2, mitochondrial, found in Aedes aegypti (Yellowfever mosquito).